Reading from the N-terminus, the 445-residue chain is Membrane protein insertase YidC (445 aa).

A run of 5 helical transmembrane segments spans residues 6-26 (VVAILLAILPIFLFAVEPIKV), 248-268 (FGWAIMLFTLIVRLILYPLYH), 313-333 (ASGCLMLLIQLPIFMLLWSVI), 352-372 (LSAGGFSNNWLFLVITIVASY), and 388-408 (GIIMSVIFPFLFVGLPSGLFL).

It belongs to the OXA1/ALB3/YidC family. Type 1 subfamily. Interacts with the Sec translocase complex via SecD. Specifically interacts with transmembrane segments of nascent integral membrane proteins during membrane integration.

Its subcellular location is the cell inner membrane. Functionally, required for the insertion and/or proper folding and/or complex formation of integral membrane proteins into the membrane. Involved in integration of membrane proteins that insert both dependently and independently of the Sec translocase complex, as well as at least some lipoproteins. Aids folding of multispanning membrane proteins. This is Membrane protein insertase YidC from Thermotoga maritima (strain ATCC 43589 / DSM 3109 / JCM 10099 / NBRC 100826 / MSB8).